Consider the following 246-residue polypeptide: Ribonuclease 3 (246 aa).

Residues 18 to 147 (FQELQKKIGI…FIGALYLDQG (130 aa)) enclose the RNase III domain. Glu60 contacts Mg(2+). Residue Asp64 is part of the active site. Residues Asp133 and Glu136 each coordinate Mg(2+). The active site involves Glu136. A DRBM domain is found at 173–242 (DFKSQLQELV…AQMALETLRA (70 aa)).

Belongs to the ribonuclease III family. Homodimer. Mg(2+) serves as cofactor.

It is found in the cytoplasm. The catalysed reaction is Endonucleolytic cleavage to 5'-phosphomonoester.. Functionally, digests double-stranded RNA. Involved in the processing of primary rRNA transcript to yield the immediate precursors to the large and small rRNAs (23S and 16S). Processes some mRNAs, and tRNAs when they are encoded in the rRNA operon. Processes pre-crRNA and tracrRNA of type II CRISPR loci if present in the organism. This Geobacillus thermodenitrificans (strain NG80-2) protein is Ribonuclease 3.